The following is a 448-amino-acid chain: N-succinylarginine dihydrolase (448 aa).

Residues Ala19–Ser28, Asn110, and His137–Arg138 contribute to the substrate site. The active site involves Glu174. Arg216 lines the substrate pocket. Residue His252 is part of the active site. 2 residues coordinate substrate: Asp254 and Asn366. Residue Cys372 is the Nucleophile of the active site.

This sequence belongs to the succinylarginine dihydrolase family. Homodimer.

It catalyses the reaction N(2)-succinyl-L-arginine + 2 H2O + 2 H(+) = N(2)-succinyl-L-ornithine + 2 NH4(+) + CO2. It functions in the pathway amino-acid degradation; L-arginine degradation via AST pathway; L-glutamate and succinate from L-arginine: step 2/5. Functionally, catalyzes the hydrolysis of N(2)-succinylarginine into N(2)-succinylornithine, ammonia and CO(2). The protein is N-succinylarginine dihydrolase of Legionella pneumophila (strain Paris).